A 169-amino-acid chain; its full sequence is Cell division inhibitor SulA (169 aa).

The interval 106–112 (ALRTGNY) is ftsZ binding. The tract at residues 162 to 169 (KIHSNLYH) is lon protease binding.

Belongs to the SulA family. In terms of assembly, interacts with FtsZ. In terms of processing, is rapidly cleaved and degraded by the Lon protease once DNA damage is repaired.

Component of the SOS system and an inhibitor of cell division. Accumulation of SulA causes rapid cessation of cell division and the appearance of long, non-septate filaments. In the presence of GTP, binds a polymerization-competent form of FtsZ in a 1:1 ratio, thus inhibiting FtsZ polymerization and therefore preventing it from participating in the assembly of the Z ring. This mechanism prevents the premature segregation of damaged DNA to daughter cells during cell division. The protein is Cell division inhibitor SulA of Salmonella gallinarum (strain 287/91 / NCTC 13346).